The sequence spans 569 residues: GATOR1 complex protein NPRL3 (569 aa).

Disordered regions lie at residues 27 to 60 (PFQR…DQDG) and 441 to 476 (TPNA…SGDS). Polar residues-rich tracts occupy residues 34-52 (HPAS…NNTG) and 441-468 (TPNA…NSSA). Residue Ser-476 is modified to Phosphoserine.

This sequence belongs to the NPR3 family. Within the GATOR complex, component of the GATOR1 subcomplex, made of DEPDC5, NPRL2 and NPRL3. GATOR1 mediates the strong interaction of the GATOR complex with small GTPases Rag (RagA/RRAGA, RagB/RRAGB, RagC/RRAGC and/or RagD/RRAGD) heterodimers. GATOR1 interacts with GPR155/LYCHOS; interaction takes place in presence of cholesterol and prevents interaction between GATOR1 and KICSTOR.

The protein resides in the lysosome membrane. As a component of the GATOR1 complex functions as an inhibitor of the amino acid-sensing branch of the mTORC1 pathway. In response to amino acid depletion, the GATOR1 complex has GTPase activating protein (GAP) activity and strongly increases GTP hydrolysis by RagA/RRAGA (or RagB/RRAGB) within heterodimeric Rag complexes, thereby turning them into their inactive GDP-bound form, releasing mTORC1 from lysosomal surface and inhibiting mTORC1 signaling. In the presence of abundant amino acids, the GATOR1 complex is negatively regulated by GATOR2, the other GATOR subcomplex, in this amino acid-sensing branch of the TORC1 pathway. The sequence is that of GATOR1 complex protein NPRL3 from Mus musculus (Mouse).